We begin with the raw amino-acid sequence, 283 residues long: Lactoylglutathione lyase GLX1 (283 aa).

Ala2 carries the post-translational modification N-acetylalanine. 2 consecutive VOC domains span residues 17 to 141 and 147 to 275; these read RFLH…LIQR and PFCQ…LVDN. Residue His20 participates in Zn(2+) binding. Residue Arg24 coordinates substrate. Residue Glu71 coordinates Zn(2+). The substrate site is built by Asn75 and His89. His89, Glu137, and Gln150 together coordinate Zn(2+). Glu137 (proton donor/acceptor) is an active-site residue. Positions 150 and 154 each coordinate substrate. Gln150 contacts a divalent metal cation. Glu201 provides a ligand contact to Zn(2+). Residue Glu201 coordinates a divalent metal cation. Substrate is bound at residue Asn205. Gln219 is an a divalent metal cation binding site. A substrate-binding site is contributed by 251 to 252; sequence PL. Val271 provides a ligand contact to a divalent metal cation.

This sequence belongs to the glyoxalase I family. In terms of assembly, homodimer. Requires Zn(2+) as cofactor. Phosphorylated by SnRK2.8.

It carries out the reaction (R)-S-lactoylglutathione = methylglyoxal + glutathione. Its pathway is secondary metabolite metabolism; methylglyoxal degradation; (R)-lactate from methylglyoxal: step 1/2. Catalyzes the conversion of hemimercaptal, formed from methylglyoxal and glutathione, to S-lactoylglutathione. The polypeptide is Lactoylglutathione lyase GLX1 (Arabidopsis thaliana (Mouse-ear cress)).